Here is a 103-residue protein sequence, read N- to C-terminus: Transcriptional regulator WhiB7 (103 aa).

The [4Fe-4S] cluster site is built by Cys-17, Cys-49, Cys-52, and Cys-58. The 58-residue stretch at 25–82 (PCHVGDPDLWFAENPGDLERAKALCAGCPIRVQCLTAALERQEPWGVWGGEILDRGSI) folds into the 4Fe-4S Wbl-type domain. Residues 82 to 103 (IVARKRPRGRPRKDSGGNPAAA) are disordered.

The protein belongs to the WhiB family. [4Fe-4S] cluster is required as a cofactor. In terms of processing, the Fe-S cluster can be nitrosylated by nitric oxide (NO). Post-translationally, upon Fe-S cluster removal intramolecular disulfide bonds are formed.

It localises to the cytoplasm. Acts as a transcriptional regulator. Probably redox-responsive. The apo- but not holo-form probably binds DNA. Participates in maintaining a reduced cytoplasmic (MSH/MSSM) environment under normal growth conditions and directly or indirectly controls the concentration of mycothiol (MSH + MSSM). The protein is Transcriptional regulator WhiB7 (whiB7) of Mycolicibacterium smegmatis (strain ATCC 700084 / mc(2)155) (Mycobacterium smegmatis).